The following is a 426-amino-acid chain: Serine hydroxymethyltransferase (426 aa).

(6S)-5,6,7,8-tetrahydrofolate is bound by residues Leu-118 and 122–124 (GHL). Residue Lys-227 is modified to N6-(pyridoxal phosphate)lysine.

This sequence belongs to the SHMT family. In terms of assembly, homodimer. It depends on pyridoxal 5'-phosphate as a cofactor.

It localises to the cytoplasm. The catalysed reaction is (6R)-5,10-methylene-5,6,7,8-tetrahydrofolate + glycine + H2O = (6S)-5,6,7,8-tetrahydrofolate + L-serine. Its pathway is one-carbon metabolism; tetrahydrofolate interconversion. The protein operates within amino-acid biosynthesis; glycine biosynthesis; glycine from L-serine: step 1/1. Catalyzes the reversible interconversion of serine and glycine with tetrahydrofolate (THF) serving as the one-carbon carrier. This reaction serves as the major source of one-carbon groups required for the biosynthesis of purines, thymidylate, methionine, and other important biomolecules. Also exhibits THF-independent aldolase activity toward beta-hydroxyamino acids, producing glycine and aldehydes, via a retro-aldol mechanism. This chain is Serine hydroxymethyltransferase, found in Mycolicibacterium paratuberculosis (strain ATCC BAA-968 / K-10) (Mycobacterium paratuberculosis).